Reading from the N-terminus, the 202-residue chain is Recombination protein RecR (202 aa).

The C4-type zinc finger occupies 61–76 (CARCNSFTEDEVCATC). A Toprim domain is found at 84–179 (GLLCIVETPA…KVTRLARGVP (96 aa)).

The protein belongs to the RecR family.

May play a role in DNA repair. It seems to be involved in an RecBC-independent recombinational process of DNA repair. It may act with RecF and RecO. The sequence is that of Recombination protein RecR from Bordetella pertussis (strain Tohama I / ATCC BAA-589 / NCTC 13251).